A 609-amino-acid chain; its full sequence is Glutamine--fructose-6-phosphate aminotransferase [isomerizing] (609 aa).

The active-site Nucleophile; for GATase activity is Cys2. Residues 2–217 (CGIVGAIAGR…DGDTAEIRRD (216 aa)) enclose the Glutamine amidotransferase type-2 domain. SIS domains are found at residues 285 to 425 (AESV…LRGA) and 458 to 599 (WAEC…VDKP). Lys604 functions as the For Fru-6P isomerization activity in the catalytic mechanism.

In terms of assembly, homodimer.

The protein resides in the cytoplasm. The enzyme catalyses D-fructose 6-phosphate + L-glutamine = D-glucosamine 6-phosphate + L-glutamate. Functionally, catalyzes the first step in hexosamine metabolism, converting fructose-6P into glucosamine-6P using glutamine as a nitrogen source. This chain is Glutamine--fructose-6-phosphate aminotransferase [isomerizing], found in Xylella fastidiosa (strain Temecula1 / ATCC 700964).